We begin with the raw amino-acid sequence, 1026 residues long: Multidrug resistance protein MdtC (1026 aa).

The next 11 membrane-spanning stretches (helical) occupy residues 16 to 36, 333 to 353, 360 to 380, 387 to 407, 435 to 455, 459 to 479, 528 to 548, 853 to 873, 897 to 917, 953 to 973, and 984 to 1004; these read LLALAITLVGLLGLRLLPVAP, EVEQSLAIAIALVILVVFLFL, LIPAVTVPVSLIGTCAAIYLC, LSLMALTIASGFVVDDAIVVL, VFSISLSLAAVFIPLLFMGGI, LFHEFAITLSASIAISLLIAL, WVLLTLLAVIGLNIWLYISIP, LLLILAAIATVYIVLGILYES, LFNAPFSLIALIGIMLLIGLV, PILMTTLAALFGALPLAFSYG, and ITIVGGLLVSQILTLYTTPVV.

The protein belongs to the resistance-nodulation-cell division (RND) (TC 2.A.6) family. MdtC subfamily. As to quaternary structure, part of a tripartite efflux system composed of MdtA, MdtB and MdtC. MdtC forms a heteromultimer with MdtB.

It localises to the cell inner membrane. This chain is Multidrug resistance protein MdtC, found in Edwardsiella ictaluri (strain 93-146).